A 335-amino-acid chain; its full sequence is L-tyrosine isonitrile synthase (335 aa).

This sequence belongs to the isocyanide synthase family.

The enzyme catalyses D-ribulose 5-phosphate + L-tyrosine = (2S)-3-(4-hydroxyphenyl)-2-isocyanopropanoate + hydroxyacetone + formaldehyde + phosphate + H2O + H(+). In terms of biological role, involved in the biosynthesis of rhabduscin, a tyrosine derivative which is a potent inhibitor of phenoloxidase, a key component of the insect's innate immune system. Responsible for the synthesis of the isonitrile group on tyrosine using the C2 of ribulose 5-phosphate as the source of the carbon atom. This chain is L-tyrosine isonitrile synthase, found in Xenorhabdus nematophila (strain ATCC 19061 / DSM 3370 / CCUG 14189 / LMG 1036 / NCIMB 9965 / AN6).